The sequence spans 319 residues: Ankyrin repeat domain-containing protein 1 (319 aa).

Positions 61-89 (KSEKQREAELKKKKLEQRSKLENLEDLEI) form a coiled coil. ANK repeat units lie at residues 152–181 (YKRTALHRACLEGHLAIVEKLMEAGAQIEF), 185–214 (LESTAIHWASRGGNLDVLKLLLNKGAKISA), 218–247 (LLSTALHVAVRTGHYECAEHLIACEADLNA), 251–280 (EGDTPLHDAVRLNRYKMIRLLIMYGADLNI), and 284–315 (AGKTPMDLVLHWQNGTKAIFDSLRENSYKTSR).

In terms of assembly, interacts with YBX1. Interacts with TTN/titin. Mainly expressed in activated vascular endothelial cells. To a lower extent, also expressed in hepatoma cells.

It is found in the nucleus. May play an important role in endothelial cell activation. May act as a nuclear transcription factor that negatively regulates the expression of cardiac genes. Induction seems to be correlated with apoptotic cell death in hepatoma cells. This is Ankyrin repeat domain-containing protein 1 (ANKRD1) from Homo sapiens (Human).